The primary structure comprises 349 residues: tRNA pseudouridine synthase D (349 aa).

Phe-27 lines the substrate pocket. The Nucleophile role is filled by Asp-80. Residue Asn-129 coordinates substrate. A TRUD domain is found at 155–303 (GVPNYFGAQR…VEAARRAMLL (149 aa)). Residue Phe-329 participates in substrate binding.

This sequence belongs to the pseudouridine synthase TruD family.

The enzyme catalyses uridine(13) in tRNA = pseudouridine(13) in tRNA. Its function is as follows. Responsible for synthesis of pseudouridine from uracil-13 in transfer RNAs. This Escherichia coli O6:H1 (strain CFT073 / ATCC 700928 / UPEC) protein is tRNA pseudouridine synthase D.